The chain runs to 208 residues: Ribosomal RNA large subunit methyltransferase E (208 aa).

Residues Gly62, Trp64, Asp82, Asp98, and Asp123 each contribute to the S-adenosyl-L-methionine site. Residue Lys163 is the Proton acceptor of the active site.

The protein belongs to the class I-like SAM-binding methyltransferase superfamily. RNA methyltransferase RlmE family.

The protein localises to the cytoplasm. The enzyme catalyses uridine(2552) in 23S rRNA + S-adenosyl-L-methionine = 2'-O-methyluridine(2552) in 23S rRNA + S-adenosyl-L-homocysteine + H(+). Its function is as follows. Specifically methylates the uridine in position 2552 of 23S rRNA at the 2'-O position of the ribose in the fully assembled 50S ribosomal subunit. The sequence is that of Ribosomal RNA large subunit methyltransferase E from Haemophilus ducreyi (strain 35000HP / ATCC 700724).